Consider the following 875-residue polypeptide: Probable inorganic carbon transporter subunit DabA (875 aa).

Residues C380, D382, H563, and C578 each coordinate Zn(2+).

Belongs to the inorganic carbon transporter (TC 9.A.2) DabA family. In terms of assembly, forms a complex with DabB. It depends on Zn(2+) as a cofactor.

It is found in the cell membrane. Part of an energy-coupled inorganic carbon pump. The chain is Probable inorganic carbon transporter subunit DabA from Geobacillus thermodenitrificans (strain NG80-2).